Reading from the N-terminus, the 315-residue chain is MTIDSGFNHITVLLDEAVEALALRADGCYLDGTFGRGGHSRLILSKLGPQGRLLGFDKDPQAIATGQALAAEDGRFVIVQRSFAELGAEVAARGLHGKVSGVLLDLGVSSPQLDDPERGFSFLNDGPLDMRMNPDQGISAAEFIATAPVEEIARVFKEYGEERFAGRMARAVVERREKQPFTRTADLAEVLKVANPAWEKGKNPATRAFQGLRIHVNNELGDLEAGLEAALDALEVGGRLAVISFHSLEDRIVKLFMRKLVKGEADNLPRNLPVQHKVFEPKIKLIGKAQFASEAELKANPRSRSAVMRVAEKLR.

Residues 37–39 (GGH), Asp57, Phe83, Asp105, and Gln112 contribute to the S-adenosyl-L-methionine site.

It belongs to the methyltransferase superfamily. RsmH family.

The protein localises to the cytoplasm. It carries out the reaction cytidine(1402) in 16S rRNA + S-adenosyl-L-methionine = N(4)-methylcytidine(1402) in 16S rRNA + S-adenosyl-L-homocysteine + H(+). Functionally, specifically methylates the N4 position of cytidine in position 1402 (C1402) of 16S rRNA. In Pseudomonas putida (strain ATCC 700007 / DSM 6899 / JCM 31910 / BCRC 17059 / LMG 24140 / F1), this protein is Ribosomal RNA small subunit methyltransferase H.